The sequence spans 172 residues: MERIFLIGARASGKTTAGRILAEKLGWRCADTDEMVQRRAGCSIADMVARDGWPVFREAEAGALQAACALTRVVVSTGGGMVLRADNRAALREGGIVFYLCAPAAVLASRLVLDPVVSQRPSLTGGNPAAEIAAVLAERDTLYRETAHHVVDACQPAAAVAGQMLRLLAAAG.

Residue 8 to 15 (GARASGKT) coordinates ATP.

Belongs to the shikimate kinase family.

Its subcellular location is the cytoplasm. It carries out the reaction shikimate + ATP = 3-phosphoshikimate + ADP + H(+). It functions in the pathway metabolic intermediate biosynthesis; chorismate biosynthesis; chorismate from D-erythrose 4-phosphate and phosphoenolpyruvate: step 5/7. In Oleidesulfovibrio alaskensis (strain ATCC BAA-1058 / DSM 17464 / G20) (Desulfovibrio alaskensis), this protein is Shikimate kinase.